Reading from the N-terminus, the 230-residue chain is Large ribosomal subunit protein uL1 (230 aa).

This sequence belongs to the universal ribosomal protein uL1 family. As to quaternary structure, part of the 50S ribosomal subunit.

Binds directly to 23S rRNA. The L1 stalk is quite mobile in the ribosome, and is involved in E site tRNA release. In terms of biological role, protein L1 is also a translational repressor protein, it controls the translation of the L11 operon by binding to its mRNA. This chain is Large ribosomal subunit protein uL1, found in Ligilactobacillus salivarius (strain UCC118) (Lactobacillus salivarius).